The chain runs to 378 residues: UPF0754 membrane protein BCAH187_A1042 (378 aa).

The next 2 membrane-spanning stretches (helical) occupy residues 1-21 and 357-377; these read MNIWLSMLTTTGLGAIIGGFT and YLGALLGGMIGIVQGLLLLFL.

The protein belongs to the UPF0754 family.

Its subcellular location is the cell membrane. The protein is UPF0754 membrane protein BCAH187_A1042 of Bacillus cereus (strain AH187).